The chain runs to 81 residues: Photosystem I iron-sulfur center (81 aa).

4Fe-4S ferredoxin-type domains lie at 2-31 and 37-68; these read SHSV…MVPW and GQIA…VRVY. The [4Fe-4S] cluster site is built by Cys11, Cys14, Cys17, Cys21, Cys48, Cys51, Cys54, and Cys58.

The eukaryotic PSI reaction center is composed of at least 11 subunits. The cofactor is [4Fe-4S] cluster.

The protein localises to the plastid. Its subcellular location is the chloroplast thylakoid membrane. It carries out the reaction reduced [plastocyanin] + hnu + oxidized [2Fe-2S]-[ferredoxin] = oxidized [plastocyanin] + reduced [2Fe-2S]-[ferredoxin]. In terms of biological role, apoprotein for the two 4Fe-4S centers FA and FB of photosystem I (PSI); essential for photochemical activity. FB is the terminal electron acceptor of PSI, donating electrons to ferredoxin. The C-terminus interacts with PsaA/B/D and helps assemble the protein into the PSI complex. Required for binding of PsaD and PsaE to PSI. PSI is a plastocyanin/cytochrome c6-ferredoxin oxidoreductase, converting photonic excitation into a charge separation, which transfers an electron from the donor P700 chlorophyll pair to the spectroscopically characterized acceptors A0, A1, FX, FA and FB in turn. The chain is Photosystem I iron-sulfur center from Euglena gracilis.